Here is a 413-residue protein sequence, read N- to C-terminus: Scarecrow-like protein 21 (413 aa).

In terms of domain architecture, GRAS spans 41 to 413 (IVEAISRGDL…RILVSSCAWK (373 aa)). The interval 48–108 (GDLKLVLVAC…VARLAASGSS (61 aa)) is leucine repeat I (LRI). A VHIID region spans residues 127–192 (VYVLHEVCPY…GGAPNIRITG (66 aa)). The VHIID signature appears at 158–162 (IHIID). The interval 201–233 (TVKKRLEKLAKKFDVPFRFNAVSRPSCEVEVEN) is leucine repeat II (LRII). Positions 242–336 (LGVNFAYMLH…QHCMARDVVN (95 aa)) are PFYRE. An SAW region spans residues 339-413 (ACEGAERIER…RILVSSCAWK (75 aa)).

It belongs to the GRAS family. As to quaternary structure, interacts with Meloidogyne incognita 16D10. As to expression, expressed in seedlings, roots, cotyledons, leaves and flowers.

It is found in the nucleus. Functionally, probable transcription factor involved in plant development. In Arabidopsis thaliana (Mouse-ear cress), this protein is Scarecrow-like protein 21 (SCL21).